Consider the following 158-residue polypeptide: Putative 8-oxo-dGTP diphosphatase YtkD (158 aa).

Positions 6–145 (DYYQNTVQLS…SFIMKDSVLP (140 aa)) constitute a Nudix hydrolase domain. Positions 53–74 (GKVEPMECAEEAALREVKEETG) match the Nudix box motif. The Mg(2+) site is built by Glu68 and Glu72.

This sequence belongs to the Nudix hydrolase family. It depends on Mg(2+) as a cofactor.

The catalysed reaction is 8-oxo-dGTP + H2O = 8-oxo-dGMP + diphosphate + H(+). With respect to regulation, not induced by oxidative damage (following treatment with paraquat or hydrogen peroxide). Not induced by mitomycin C. Not induced by sigma-B general stress inducers such as sodium chloride, ethanol or heat. Its function is as follows. Involved in the GO system responsible for removing an oxidatively damaged form of guanine (7,8-dihydro-8-oxoguanine, 8-oxo-dGTP) from DNA and the nucleotide pool. 8-oxo-dGTP is inserted opposite dA and dC residues of template DNA with almost equal efficiency thus leading to A.T to G.C transversions. Functions, in conjunction with MutT, to protect vegetatively growing cells from DNA-damaging agents such as H(2)O(2) or t-BHP (t-butylhydroperoxide). The 2 proteins do not however protect spores. According to PubMed:15576788, phosphohydrolase that catalyzes the hydrolysis of all common nucleoside triphosphates as well as of the mutagenic analog 8-oxo-dGTP. The high catalytic efficiency on dGTP is in contrast to results from PubMed:14761999. According to PubMed:14761999, catalyzes the hydrolysis of 8-oxo-dGTP with a specific activity 413 times higher than that exhibited against dGTP. Preferentially catalyzes the hydrolysis of 8-oxo-dGTP and 8-oxo-GTP. According to PubMed:15576788, hydrolyzes nucleoside triphosphates in a stepwise fashion through the diphosphate to the monophosphate, releasing two molecules of inorganic orthophosphate. The chain is Putative 8-oxo-dGTP diphosphatase YtkD (ytkD) from Bacillus subtilis (strain 168).